A 229-amino-acid polypeptide reads, in one-letter code: UPF0173 metal-dependent hydrolase SAB1566c (229 aa).

Belongs to the UPF0173 family.

The chain is UPF0173 metal-dependent hydrolase SAB1566c from Staphylococcus aureus (strain bovine RF122 / ET3-1).